The chain runs to 371 residues: Geranylgeranyl transferase type-2 subunit alpha (371 aa).

PFTA repeat units follow at residues 45 to 79 (YSDEALIKTNELLIINPEFYTIWNYRREILINNYS), 92 to 126 (ILNQDLNFVLVQLKKFPKCYWIWNHRRWLLFELVK), 131 to 165 (NWKYEFGVVSKLLDLDQRNFHGWHYRRFVVKNMEL), 177 to 211 (INLDEFNYTTLKIQKDFSNFSAWHNRTKLIPKIYN), and 242 to 276 (LLKNDLEMIKTGVYMSPEDTSVWLYLYWLLTDDLF).

Belongs to the protein prenyltransferase subunit alpha family. In terms of assembly, heterodimer of an alpha and a beta subunit.

The enzyme catalyses geranylgeranyl diphosphate + L-cysteinyl-[protein] = S-geranylgeranyl-L-cysteinyl-[protein] + diphosphate. Catalyzes the transfer of a geranyl-geranyl moiety from geranyl-geranyl pyrophosphate to proteins having the C-terminal -XCC or -XCXC, where both cysteines may become modified. Acts on YPT1 and SEC4. The sequence is that of Geranylgeranyl transferase type-2 subunit alpha (BET4) from Candida albicans (Yeast).